Reading from the N-terminus, the 689-residue chain is DNA ligase (689 aa).

NAD(+) is bound by residues 40 to 44, 89 to 90, and E122; these read DQEYD and SL. K124 acts as the N6-AMP-lysine intermediate in catalysis. The NAD(+) site is built by R145, E182, K300, and K325. 4 residues coordinate Zn(2+): C419, C422, C437, and C442. The region spanning 600-689 is the BRCT domain; the sequence is QADGVLTGAT…SADASADASA (90 aa).

Belongs to the NAD-dependent DNA ligase family. LigA subfamily. It depends on Mg(2+) as a cofactor. Mn(2+) is required as a cofactor.

The catalysed reaction is NAD(+) + (deoxyribonucleotide)n-3'-hydroxyl + 5'-phospho-(deoxyribonucleotide)m = (deoxyribonucleotide)n+m + AMP + beta-nicotinamide D-nucleotide.. In terms of biological role, DNA ligase that catalyzes the formation of phosphodiester linkages between 5'-phosphoryl and 3'-hydroxyl groups in double-stranded DNA using NAD as a coenzyme and as the energy source for the reaction. It is essential for DNA replication and repair of damaged DNA. This chain is DNA ligase, found in Gemmatimonas aurantiaca (strain DSM 14586 / JCM 11422 / NBRC 100505 / T-27).